The following is a 119-amino-acid chain: Large ribosomal subunit protein bL19 (119 aa).

This sequence belongs to the bacterial ribosomal protein bL19 family.

Its function is as follows. This protein is located at the 30S-50S ribosomal subunit interface and may play a role in the structure and function of the aminoacyl-tRNA binding site. The chain is Large ribosomal subunit protein bL19 from Psychromonas ingrahamii (strain DSM 17664 / CCUG 51855 / 37).